The chain runs to 506 residues: ATP synthase subunit alpha (506 aa).

An ATP-binding site is contributed by 170-177; the sequence is GDRQTGKT.

It belongs to the ATPase alpha/beta chains family. As to quaternary structure, F-type ATPases have 2 components, CF(1) - the catalytic core - and CF(0) - the membrane proton channel. CF(1) has five subunits: alpha(3), beta(3), gamma(1), delta(1), epsilon(1). CF(0) has four main subunits: a(1), b(1), b'(1) and c(9-12).

Its subcellular location is the cellular thylakoid membrane. It catalyses the reaction ATP + H2O + 4 H(+)(in) = ADP + phosphate + 5 H(+)(out). Produces ATP from ADP in the presence of a proton gradient across the membrane. The alpha chain is a regulatory subunit. This Synechococcus sp. (strain CC9311) protein is ATP synthase subunit alpha.